Consider the following 262-residue polypeptide: UPF0619 GPI-anchored membrane protein C1322.10 (262 aa).

Residues 1 to 20 (MLARVGTTLFFLANALAAYA) form the signal peptide. 2 disordered regions span residues 136 to 165 (STSA…SSST) and 175 to 194 (ISSS…SGSI). N-linked (GlcNAc...) asparagine glycosylation is found at N207 and N227. N242 is lipidated: GPI-like-anchor amidated asparagine. Residues 243–262 (GVAQLSVAACMGIAALMLIA) constitute a propeptide, removed in mature form.

The protein belongs to the UPF0619 family.

It localises to the golgi apparatus membrane. The protein resides in the cell membrane. The chain is UPF0619 GPI-anchored membrane protein C1322.10 from Schizosaccharomyces pombe (strain 972 / ATCC 24843) (Fission yeast).